We begin with the raw amino-acid sequence, 58 residues long: Photosystem II reaction center protein K (58 aa).

A propeptide spanning residues 1–21 is cleaved from the precursor; that stretch reads MLNMISTFFDSSSNFSEAFLA. Residues 29 to 49 traverse the membrane as a helical segment; that stretch reads IFDPIVDVMPIIPVFFLLLAF.

Belongs to the PsbK family. As to quaternary structure, PSII is composed of 1 copy each of membrane proteins PsbA, PsbB, PsbC, PsbD, PsbE, PsbF, PsbH, PsbI, PsbJ, PsbK, PsbL, PsbM, PsbT, PsbX, PsbY, PsbZ, Psb30/Ycf12, at least 3 peripheral proteins of the oxygen-evolving complex and a large number of cofactors. It forms dimeric complexes.

It localises to the plastid. The protein localises to the chloroplast thylakoid membrane. Functionally, one of the components of the core complex of photosystem II (PSII). PSII is a light-driven water:plastoquinone oxidoreductase that uses light energy to abstract electrons from H(2)O, generating O(2) and a proton gradient subsequently used for ATP formation. It consists of a core antenna complex that captures photons, and an electron transfer chain that converts photonic excitation into a charge separation. This chain is Photosystem II reaction center protein K, found in Chaetosphaeridium globosum (Charophycean green alga).